Reading from the N-terminus, the 315-residue chain is Spermidine synthase 1 (315 aa).

The 238-residue stretch at 25 to 262 (PGWFSEISPL…GMIGFMLCST (238 aa)) folds into the PABS domain. Glutamine 56 contacts S-adenosyl 3-(methylsulfanyl)propylamine. Residue tyrosine 86 participates in putrescine binding. Residues glutamine 87, aspartate 111, glutamate 131, 162-163 (DG), and aspartate 181 each bind S-adenosyl 3-(methylsulfanyl)propylamine. The active-site Proton acceptor is the aspartate 181. Putrescine contacts are provided by residues 181–184 (DSSD) and tyrosine 250.

It belongs to the spermidine/spermine synthase family.

It catalyses the reaction S-adenosyl 3-(methylsulfanyl)propylamine + putrescine = S-methyl-5'-thioadenosine + spermidine + H(+). It functions in the pathway amine and polyamine biosynthesis; spermidine biosynthesis; spermidine from putrescine: step 1/1. The protein is Spermidine synthase 1 of Hyoscyamus niger (Black henbane).